Consider the following 397-residue polypeptide: Mediator of RNA polymerase II transcription subunit 3 (397 aa).

Methionine 1 carries the N-acetylmethionine modification. The span at 147–165 shows a compositional bias: low complexity; that stretch reads ASTPTTTATPHANPITHAH. 3 disordered regions span residues 147-227, 288-327, and 346-370; these read ASTP…AQAQ, SMGAQNQGGQVSMSQFNGSGNGSNPNTNTNSNNTPLQSQL, and FQQQQQQQQQQQQPQPQYNMNMGMN. Composition is skewed to polar residues over residues 166–178 and 189–202; these read SLSNPNSTATMQH and SGSTMGTPTVHNST. A compositionally biased stretch (basic residues) spans 211 to 223; the sequence is KKPRKPRQTKKAK. Residues 290–303 are compositionally biased toward polar residues; it reads GAQNQGGQVSMSQF. Low complexity predominate over residues 309 to 322; sequence GSNPNTNTNSNNTP.

The protein belongs to the mediator complex subunit 3 family. As to quaternary structure, component of the Mediator complex, which is composed of at least 21 subunits that form three structurally distinct submodules. The Mediator head module contains MED6, MED8, MED11, SRB4/MED17, SRB5/MED18, ROX3/MED19, SRB2/MED20 and SRB6/MED22, the middle module contains MED1, MED4, NUT1/MED5, MED7, CSE2/MED9, NUT2/MED10, SRB7/MED21 and SOH1/MED31, and the tail module contains MED2, PGD1/MED3, RGR1/MED14, GAL11/MED15 and SIN4/MED16. The head and the middle modules interact directly with RNA polymerase II, whereas the elongated tail module interacts with gene-specific regulatory proteins. PGD1/MED3 interacts directly with the CYC8-TUP1 corepressor proteins.

The protein resides in the nucleus. In terms of biological role, component of the Mediator complex, a coactivator involved in the regulated transcription of nearly all RNA polymerase II-dependent genes. Mediator functions as a bridge to convey information from gene-specific regulatory proteins to the basal RNA polymerase II transcription machinery. The Mediator complex, having a compact conformation in its free form, is recruited to promoters by direct interactions with regulatory proteins and serves for the assembly of a functional preinitiation complex with RNA polymerase II and the general transcription factors. The Mediator complex unfolds to an extended conformation and partially surrounds RNA polymerase II, specifically interacting with the unphosphorylated form of the C-terminal domain (CTD) of RNA polymerase II. The Mediator complex dissociates from the RNA polymerase II holoenzyme and stays at the promoter when transcriptional elongation begins. PGD1/MED3 is also involved in direct repeat recombination. This is Mediator of RNA polymerase II transcription subunit 3 (PGD1) from Saccharomyces cerevisiae (strain ATCC 204508 / S288c) (Baker's yeast).